Consider the following 601-residue polypeptide: Elongation factor 4 (601 aa).

A tr-type G domain is found at 5-188; that stretch reads SHIRNFAIIA…ALVLRLPPPT (184 aa). GTP-binding positions include 17 to 22 and 135 to 138; these read DHGKST and NKID.

It belongs to the TRAFAC class translation factor GTPase superfamily. Classic translation factor GTPase family. LepA subfamily.

The protein resides in the cell inner membrane. The catalysed reaction is GTP + H2O = GDP + phosphate + H(+). In terms of biological role, required for accurate and efficient protein synthesis under certain stress conditions. May act as a fidelity factor of the translation reaction, by catalyzing a one-codon backward translocation of tRNAs on improperly translocated ribosomes. Back-translocation proceeds from a post-translocation (POST) complex to a pre-translocation (PRE) complex, thus giving elongation factor G a second chance to translocate the tRNAs correctly. Binds to ribosomes in a GTP-dependent manner. In Rhodospirillum rubrum (strain ATCC 11170 / ATH 1.1.1 / DSM 467 / LMG 4362 / NCIMB 8255 / S1), this protein is Elongation factor 4.